A 444-amino-acid chain; its full sequence is Exodeoxyribonuclease 7 large subunit (444 aa).

It belongs to the XseA family. In terms of assembly, heterooligomer composed of large and small subunits.

It localises to the cytoplasm. The catalysed reaction is Exonucleolytic cleavage in either 5'- to 3'- or 3'- to 5'-direction to yield nucleoside 5'-phosphates.. Functionally, bidirectionally degrades single-stranded DNA into large acid-insoluble oligonucleotides, which are then degraded further into small acid-soluble oligonucleotides. In Pseudoalteromonas atlantica (strain T6c / ATCC BAA-1087), this protein is Exodeoxyribonuclease 7 large subunit.